The following is a 31-amino-acid chain: L-amino-acid oxidase (31 aa).

The protein belongs to the flavin monoamine oxidase family. FIG1 subfamily. As to quaternary structure, homodimer; non-covalently linked. It depends on FAD as a cofactor. In terms of processing, N-glycosylated. As to expression, expressed by the venom gland.

It is found in the secreted. It carries out the reaction an L-alpha-amino acid + O2 + H2O = a 2-oxocarboxylate + H2O2 + NH4(+). The catalysed reaction is L-leucine + O2 + H2O = 4-methyl-2-oxopentanoate + H2O2 + NH4(+). The enzyme catalyses L-phenylalanine + O2 + H2O = 3-phenylpyruvate + H2O2 + NH4(+). It catalyses the reaction L-histidine + O2 + H2O = 3-(imidazol-5-yl)pyruvate + H2O2 + NH4(+). Its function is as follows. Catalyzes an oxidative deamination of predominantly hydrophobic and aromatic L-amino acids, thus producing hydrogen peroxide that may contribute to the diverse toxic effects of this enzyme. Is moderately active on L-Leu, L-His, and L-Phe, and very weakly active on L-Thr, and L-Cys. Exhibits diverse biological activities, such as hemorrhage, hemolysis, edema, antibacterial and antiparasitic activities, as well as regulation of platelet aggregation. Its effect on platelets is controversial, since it either induces aggregation or inhibits agonist-induced aggregation. These different effects are probably due to different experimental conditions. Inhibits growth of B.subtilis strain ATCC 6633 (MIC=32 uM), E.faecalis strain ATCC 12953 (MIC=32 uM), S.aureus strain ATCC 29213 (MIC=32 uM), S.pyogenes strain ATCC 19615 (MIC=8 uM), E.coli strain ATCC 8739 (MIC=4 uM), K.pneumoniae strain ATCC 13885 (MIC=2 uM), P.mirabilis strain ATCC 25933 (MIC=2 uM), P.aeruginosa strain ATCC 15442 (MIC=8 uM) and S.typhimurium strain ATCC 14028 (MIC=8 uM). This chain is L-amino-acid oxidase, found in Bothrops mattogrossensis (Pitviper).